The sequence spans 453 residues: GTPase Der (453 aa).

2 EngA-type G domains span residues 4 to 169 (PVVA…PPTD) and 178 to 353 (INVA…EQHR). GTP is bound by residues 10 to 17 (GRPNVGKS), 57 to 61 (DTGGL), 120 to 123 (NKCE), 184 to 191 (GRPNVGKS), 231 to 235 (DTAGI), and 296 to 299 (NKWD). A KH-like domain is found at 354–439 (RRVSTSVINE…PIRLLWRGKK (86 aa)).

Belongs to the TRAFAC class TrmE-Era-EngA-EngB-Septin-like GTPase superfamily. EngA (Der) GTPase family. As to quaternary structure, associates with the 50S ribosomal subunit.

Its function is as follows. GTPase that plays an essential role in the late steps of ribosome biogenesis. This Cyanothece sp. (strain PCC 7425 / ATCC 29141) protein is GTPase Der.